Consider the following 450-residue polypeptide: Ribulose bisphosphate carboxylase large chain (450 aa).

K4 carries the post-translational modification N6,N6,N6-trimethyllysine. Substrate contacts are provided by N113 and T163. K165 functions as the Proton acceptor in the catalytic mechanism. K167 contributes to the substrate binding site. Residues K191, D193, and E194 each coordinate Mg(2+). Residue K191 is modified to N6-carboxylysine. Residue H284 is the Proton acceptor of the active site. Positions 285, 317, and 369 each coordinate substrate.

This sequence belongs to the RuBisCO large chain family. Type I subfamily. In terms of assembly, heterohexadecamer of 8 large chains and 8 small chains; disulfide-linked. The disulfide link is formed within the large subunit homodimers. Requires Mg(2+) as cofactor. In terms of processing, the disulfide bond which can form in the large chain dimeric partners within the hexadecamer appears to be associated with oxidative stress and protein turnover.

It is found in the plastid. Its subcellular location is the chloroplast. The catalysed reaction is 2 (2R)-3-phosphoglycerate + 2 H(+) = D-ribulose 1,5-bisphosphate + CO2 + H2O. It catalyses the reaction D-ribulose 1,5-bisphosphate + O2 = 2-phosphoglycolate + (2R)-3-phosphoglycerate + 2 H(+). In terms of biological role, ruBisCO catalyzes two reactions: the carboxylation of D-ribulose 1,5-bisphosphate, the primary event in carbon dioxide fixation, as well as the oxidative fragmentation of the pentose substrate in the photorespiration process. Both reactions occur simultaneously and in competition at the same active site. This chain is Ribulose bisphosphate carboxylase large chain, found in Crassula rupestris subsp. marnieriana (Pygmyweed).